The following is a 508-amino-acid chain: Glycerol kinase (508 aa).

T15 is a binding site for ADP. 3 residues coordinate ATP: T15, S16, and S17. T15 lines the sn-glycerol 3-phosphate pocket. Residue R19 participates in ADP binding. Residues R85, E86, Y138, and D251 each contribute to the sn-glycerol 3-phosphate site. Positions 85, 86, 138, 251, and 252 each coordinate glycerol. Residues T273, G317, and G419 each coordinate ADP. Residues T273, G317, and G419 each coordinate ATP.

The protein belongs to the FGGY kinase family.

It catalyses the reaction glycerol + ATP = sn-glycerol 3-phosphate + ADP + H(+). Its pathway is polyol metabolism; glycerol degradation via glycerol kinase pathway; sn-glycerol 3-phosphate from glycerol: step 1/1. Inhibited by fructose 1,6-bisphosphate (FBP). In terms of biological role, key enzyme in the regulation of glycerol uptake and metabolism. Catalyzes the phosphorylation of glycerol to yield sn-glycerol 3-phosphate. The protein is Glycerol kinase of Mycoplasma genitalium (strain ATCC 33530 / DSM 19775 / NCTC 10195 / G37) (Mycoplasmoides genitalium).